Reading from the N-terminus, the 466-residue chain is Acetylcholine-gated chloride channel subunit acc-1 (466 aa).

An N-terminal signal peptide occupies residues 1 to 24 (MSHPGWIMVSFLTELLSQSSKGIA). Residues 25-242 (QSLDNCANDT…FVFERRYGWY (218 aa)) are Extracellular-facing. Residues asparagine 32, asparagine 102, and asparagine 143 are each glycosylated (N-linked (GlcNAc...) asparagine). Cysteine 158 and cysteine 172 are disulfide-bonded. Residue asparagine 211 is glycosylated (N-linked (GlcNAc...) asparagine). Residues 243 to 263 (VLQGYIPTMVTIVISWISFYL) form a helical membrane-spanning segment. The Cytoplasmic portion of the chain corresponds to 264 to 272 (GPRAIPART). Residues 273-290 (MLGVNSLLAMTFQFGNII) form a helical membrane-spanning segment. The Extracellular segment spans residues 291-304 (RNLPRVSYVKAIDV). The helical transmembrane segment at 305–325 (WMLSGMLFIFLSLLELAVVGF) threads the bilayer. Over 326-427 (MSRNEGLPPK…MRELRPETVD (102 aa)) the chain is Cytoplasmic. The tract at residues 333–352 (PPKVKKRKRQEDDDEGFSWK) is disordered. The helical transmembrane segment at 428 to 448 (FYSAIFFPTAYMLFNISYWSF) threads the bilayer. Residues 449–466 (YLTSLSEYFDEDVNIDQP) lie on the Extracellular side of the membrane.

The protein belongs to the ligand-gated ion channel (TC 1.A.9) family. As to quaternary structure, homopentamer (in vitro). Forms heteropentamers composed of acc-1 and acc-4 or acc-1 and acc-3. Both homopentamers and heteropentamers form functional ion channels. Expressed in a subset of cholinergic motor neurons including cholinergic motor neurons in the ventral cord, the retrovesicular ganglion and in head neurons such as the SMD, RMD motor neurons, the AVA and AVE command interneurons and the SAA neurons. Also expressed in a small number of glutamatergic neurons including the pharyngeal neurons MI and M3, the PLM neurons and a pair of neurons in the lateral ganglion.

Its subcellular location is the cell membrane. Acetylcholine-gated chloride channel subunit. Forms functional homopentameric (in vitro) and functional heteropentameric ion channels with acc-3 and acc-4 ion channel subunits. Currents in channels are triggered in response to acetylcholine, but not in response to GABA, glutamate, glycine, histamine or dopamine. The sequence is that of Acetylcholine-gated chloride channel subunit acc-1 from Caenorhabditis elegans.